Here is an 85-residue protein sequence, read N- to C-terminus: Large ribosomal subunit protein eL43 (85 aa).

Residues C32, C35, C50, and C53 each coordinate Zn(2+). Residues 32–53 form a C4-type zinc finger; that stretch reads CTFCGKTKMKRRAVGIWHCGSC.

Belongs to the eukaryotic ribosomal protein eL43 family. In terms of assembly, component of the large ribosomal subunit.

It is found in the cytoplasm. Its function is as follows. Component of the large ribosomal subunit. The ribosome is a large ribonucleoprotein complex responsible for the synthesis of proteins in the cell. The protein is Large ribosomal subunit protein eL43 (rpl37a) of Myxine glutinosa (Atlantic hagfish).